A 306-amino-acid polypeptide reads, in one-letter code: Homoserine kinase (306 aa).

ATP is bound at residue 84 to 94 (PAGLGLGSSGA).

The protein belongs to the GHMP kinase family. Homoserine kinase subfamily.

The protein localises to the cytoplasm. The enzyme catalyses L-homoserine + ATP = O-phospho-L-homoserine + ADP + H(+). It functions in the pathway amino-acid biosynthesis; L-threonine biosynthesis; L-threonine from L-aspartate: step 4/5. In terms of biological role, catalyzes the ATP-dependent phosphorylation of L-homoserine to L-homoserine phosphate. In Sulfolobus acidocaldarius (strain ATCC 33909 / DSM 639 / JCM 8929 / NBRC 15157 / NCIMB 11770), this protein is Homoserine kinase.